The sequence spans 268 residues: MERYDLCFKRLAEKQEGAFVPFVTLGDPTPELSLQIIDALVAGGADALELGIPFSDPLADGPTIQNANLRAFAAGVTPEHCFDMLAAIRQKYPDMPIGLLMYANLVFSNGIDSFYARCQQVGVDSVLVADVPVEESAPFRQAAMRHNVAPIFICPPNAGDDLLREISSHGRGYTYLLSRAGVTGSETRASLPLKHLVDKLREYHAAPALQGFGISEASQVQQAISAGAAGAISGSAVVRIIEKHLNDPALMLSELTAFAASLKAATRS.

Residues E49 and D60 each act as proton acceptor in the active site.

The protein belongs to the TrpA family. Tetramer of two alpha and two beta chains.

The enzyme catalyses (1S,2R)-1-C-(indol-3-yl)glycerol 3-phosphate + L-serine = D-glyceraldehyde 3-phosphate + L-tryptophan + H2O. It functions in the pathway amino-acid biosynthesis; L-tryptophan biosynthesis; L-tryptophan from chorismate: step 5/5. In terms of biological role, the alpha subunit is responsible for the aldol cleavage of indoleglycerol phosphate to indole and glyceraldehyde 3-phosphate. In Erwinia tasmaniensis (strain DSM 17950 / CFBP 7177 / CIP 109463 / NCPPB 4357 / Et1/99), this protein is Tryptophan synthase alpha chain.